The following is a 455-amino-acid chain: Phosphoglucosamine mutase (455 aa).

The active-site Phosphoserine intermediate is the Ser102. Mg(2+) contacts are provided by Ser102, Asp241, Asp243, and Asp245. Ser102 is modified (phosphoserine).

It belongs to the phosphohexose mutase family. Mg(2+) serves as cofactor. In terms of processing, activated by phosphorylation.

It carries out the reaction alpha-D-glucosamine 1-phosphate = D-glucosamine 6-phosphate. Functionally, catalyzes the conversion of glucosamine-6-phosphate to glucosamine-1-phosphate. This Legionella pneumophila (strain Paris) protein is Phosphoglucosamine mutase.